The sequence spans 130 residues: Glycine cleavage system H protein (130 aa).

The Lipoyl-binding domain occupies 23–105 (IGIIGITDFA…YGKGWMIKVE (83 aa)). The residue at position 64 (Lys64) is an N6-lipoyllysine.

It belongs to the GcvH family. As to quaternary structure, the glycine cleavage system is composed of four proteins: P, T, L and H. Requires (R)-lipoate as cofactor.

Functionally, the glycine cleavage system catalyzes the degradation of glycine. The H protein shuttles the methylamine group of glycine from the P protein to the T protein. This chain is Glycine cleavage system H protein, found in Carboxydothermus hydrogenoformans (strain ATCC BAA-161 / DSM 6008 / Z-2901).